Reading from the N-terminus, the 241-residue chain is Glucosamine-6-phosphate deaminase (241 aa).

Asp67 serves as the catalytic Proton acceptor; for enolization step. Asn136 acts as the For ring-opening step in catalysis. His138 functions as the Proton acceptor; for ring-opening step in the catalytic mechanism. Glu143 (for ring-opening step) is an active-site residue.

The protein belongs to the glucosamine/galactosamine-6-phosphate isomerase family. NagB subfamily.

It catalyses the reaction alpha-D-glucosamine 6-phosphate + H2O = beta-D-fructose 6-phosphate + NH4(+). Its pathway is amino-sugar metabolism; N-acetylneuraminate degradation; D-fructose 6-phosphate from N-acetylneuraminate: step 5/5. Catalyzes the reversible isomerization-deamination of glucosamine 6-phosphate (GlcN6P) to form fructose 6-phosphate (Fru6P) and ammonium ion. The polypeptide is Glucosamine-6-phosphate deaminase (Clostridium tetani (strain Massachusetts / E88)).